A 201-amino-acid chain; its full sequence is 3-isopropylmalate dehydratase small subunit (201 aa).

The protein belongs to the LeuD family. LeuD type 1 subfamily. Heterodimer of LeuC and LeuD.

The enzyme catalyses (2R,3S)-3-isopropylmalate = (2S)-2-isopropylmalate. It functions in the pathway amino-acid biosynthesis; L-leucine biosynthesis; L-leucine from 3-methyl-2-oxobutanoate: step 2/4. Its function is as follows. Catalyzes the isomerization between 2-isopropylmalate and 3-isopropylmalate, via the formation of 2-isopropylmaleate. This Methylorubrum extorquens (strain ATCC 14718 / DSM 1338 / JCM 2805 / NCIMB 9133 / AM1) (Methylobacterium extorquens) protein is 3-isopropylmalate dehydratase small subunit.